The sequence spans 336 residues: Cytosolic 5'-nucleotidase 3A (336 aa).

Asp-88 acts as the Nucleophile in catalysis. Asp-88 and Asp-90 together coordinate Mg(2+). The active-site Proton donor is the Asp-90. Residue Glu-135 coordinates CMP. The N(7)-methyl-GMP site is built by Glu-135 and Ser-156. Residues 203–204 and Lys-252 contribute to the substrate site; that span reads SA. Asp-277 is a binding site for Mg(2+). Ser-278 bears the Phosphoserine mark.

This sequence belongs to the pyrimidine 5'-nucleotidase family. As to quaternary structure, monomer. In terms of tissue distribution, isoforms 1, 3 and 4 are expressed in reticulocytes. Isoform 4 is hardly detectable in bone marrow and fetal liver.

The protein localises to the cytoplasm. Its subcellular location is the endoplasmic reticulum. It catalyses the reaction N(7)-methyl-GMP + H2O = N(7)-methylguanosine + phosphate. The catalysed reaction is CMP + H2O = cytidine + phosphate. The enzyme catalyses a ribonucleoside 5'-phosphate + H2O = a ribonucleoside + phosphate. In terms of biological role, nucleotidase which shows specific activity towards cytidine monophosphate (CMP) and 7-methylguanosine monophosphate (m(7)GMP). CMP seems to be the preferred substrate. The sequence is that of Cytosolic 5'-nucleotidase 3A (NT5C3A) from Homo sapiens (Human).